Reading from the N-terminus, the 254-residue chain is Trans-aconitate 2-methyltransferase (254 aa).

The protein belongs to the methyltransferase superfamily. Tam family.

The protein localises to the cytoplasm. It catalyses the reaction trans-aconitate + S-adenosyl-L-methionine = (E)-3-(methoxycarbonyl)pent-2-enedioate + S-adenosyl-L-homocysteine. Its function is as follows. Catalyzes the S-adenosylmethionine monomethyl esterification of trans-aconitate. This chain is Trans-aconitate 2-methyltransferase, found in Mycobacterium sp. (strain JLS).